We begin with the raw amino-acid sequence, 108 residues long: UPF0145 protein HDEF_1024 (108 aa).

Belongs to the UPF0145 family.

This Hamiltonella defensa subsp. Acyrthosiphon pisum (strain 5AT) protein is UPF0145 protein HDEF_1024.